We begin with the raw amino-acid sequence, 446 residues long: Probable glucuronosyltransferase Os04g0650300 (446 aa).

Over 1–30 (MKLPLLRPLWPMLSPAAGSPDSPPEPSKPS) the chain is Cytoplasmic. Residues 31–51 (LPAAWLLLHALFCATSMAVGF) form a helical; Signal-anchor for type II membrane protein membrane-spanning segment. At 52–446 (RFSRLIVYLL…TTLLNTEGQH (395 aa)) the chain is on the lumenal side. N-linked (GlcNAc...) asparagine glycosylation is present at Asn87. The disordered stretch occupies residues 425–446 (QQDAKPETPLKRTTLLNTEGQH).

It belongs to the glycosyltransferase 43 family.

It is found in the golgi apparatus membrane. Involved in the synthesis of glucuronoxylan hemicellulose in secondary cell walls. The sequence is that of Probable glucuronosyltransferase Os04g0650300 from Oryza sativa subsp. japonica (Rice).